A 552-amino-acid chain; its full sequence is Phosphoglucomutase (552 aa).

The Phosphoserine intermediate role is filled by serine 135. Residues serine 135, aspartate 289, aspartate 291, and aspartate 293 each coordinate Mg(2+).

This sequence belongs to the phosphohexose mutase family. Mg(2+) serves as cofactor.

It catalyses the reaction alpha-D-glucose 1-phosphate = alpha-D-glucose 6-phosphate. The protein operates within glycolipid metabolism; diglucosyl-diacylglycerol biosynthesis. In terms of biological role, catalyzes the interconversion between glucose-6-phosphate and alpha-glucose-1-phosphate. This is the first step in the biosynthesis of diglucosyl-diacylglycerol (Glc2-DAG), i.e. a glycolipid found in the membrane, which is also used as a membrane anchor for lipoteichoic acid (LTA). This Staphylococcus saprophyticus subsp. saprophyticus (strain ATCC 15305 / DSM 20229 / NCIMB 8711 / NCTC 7292 / S-41) protein is Phosphoglucomutase (pgcA).